The following is a 208-amino-acid chain: Probable very-long-chain (3R)-3-hydroxyacyl-CoA dehydratase (208 aa).

The Cytoplasmic segment spans residues 1-11 (MSKILKIQYLK). The chain crosses the membrane as a helical span at residues 12–35 (LYNVISCFLWMSVLLRTGLIWGIT). Residues 36–46 (KDTAVVFHETN) lie on the Lumenal side of the membrane. The helical transmembrane segment at 47 to 67 (TLVRWVQTLAIAEVFHSIFGL) threads the bilayer. Topologically, residues 68 to 78 (VSSSPLTTIIQ) are cytoplasmic. The chain crosses the membrane as a helical span at residues 79 to 97 (VASRLYLVWGVCYPFSYVI). Residues 98–102 (EGSPI) lie on the Lumenal side of the membrane. Residues 103 to 123 (YLSMIIAWSITEIIRYAFYAF) traverse the membrane as a helical segment. At 124–134 (NLNGDIPAFLT) the chain is on the cytoplasmic side. Residues 135–157 (WLRYNTFLILYPIGAGSEFLLVL) traverse the membrane as a helical segment. Catalysis depends on residues Tyr145 and Glu152. Over 158–171 (KSRIAAQYVWSLNK) the chain is Lumenal. Residues 172–192 (LLWPILMSIYPPGLYIMYTHM) form a helical membrane-spanning segment. The Cytoplasmic portion of the chain corresponds to 193-208 (LAQRRKISKRAAARRT).

This sequence belongs to the very long-chain fatty acids dehydratase HACD family.

The protein resides in the endoplasmic reticulum membrane. It carries out the reaction a very-long-chain (3R)-3-hydroxyacyl-CoA = a very-long-chain (2E)-enoyl-CoA + H2O. It participates in lipid metabolism; fatty acid biosynthesis. Its function is as follows. Catalyzes the third of the four reactions of the long-chain fatty acids elongation cycle. This endoplasmic reticulum-bound enzymatic process, allows the addition of two carbons to the chain of long- and very long-chain fatty acids/VLCFAs per cycle. This enzyme catalyzes the dehydration of the 3-hydroxyacyl-CoA intermediate into trans-2,3-enoyl-CoA, within each cycle of fatty acid elongation. Thereby, it participates in the production of VLCFAs of different chain lengths that are involved in multiple biological processes as precursors of membrane lipids and lipid mediators. In Schizosaccharomyces pombe (strain 972 / ATCC 24843) (Fission yeast), this protein is Probable very-long-chain (3R)-3-hydroxyacyl-CoA dehydratase.